The following is a 658-amino-acid chain: Glycogen debranching enzyme (658 aa).

The active-site Nucleophile is the Asp-335. Glu-370 (proton donor) is an active-site residue. Residues 457 to 468 (NDANGEGNRDGT) are compositionally biased toward basic and acidic residues. The disordered stretch occupies residues 457–481 (NDANGEGNRDGTDSNFSNNHGTEGL).

The protein belongs to the glycosyl hydrolase 13 family.

The catalysed reaction is Hydrolysis of (1-&gt;6)-alpha-D-glucosidic linkages to branches with degrees of polymerization of three or four glucose residues in limit dextrin.. Its pathway is glycan degradation; glycogen degradation. Removes maltotriose and maltotetraose chains that are attached by 1,6-alpha-linkage to the limit dextrin main chain, generating a debranched limit dextrin. This is Glycogen debranching enzyme from Pectobacterium atrosepticum (strain SCRI 1043 / ATCC BAA-672) (Erwinia carotovora subsp. atroseptica).